The sequence spans 243 residues: Uridylate kinase (243 aa).

Residue 15–18 (KLSG) participates in ATP binding. An involved in allosteric activation by GTP region spans residues 23–28 (GSEGFG). Gly-57 contributes to the UMP binding site. Positions 58 and 62 each coordinate ATP. UMP is bound by residues Asp-77 and 138–145 (TGNPFFTT). Residues Thr-165, Tyr-171, and Asp-174 each contribute to the ATP site.

It belongs to the UMP kinase family. Homohexamer.

It localises to the cytoplasm. The enzyme catalyses UMP + ATP = UDP + ADP. The protein operates within pyrimidine metabolism; CTP biosynthesis via de novo pathway; UDP from UMP (UMPK route): step 1/1. With respect to regulation, allosterically activated by GTP. Inhibited by UTP. Functionally, catalyzes the reversible phosphorylation of UMP to UDP. The sequence is that of Uridylate kinase from Vibrio cholerae serotype O1 (strain ATCC 39541 / Classical Ogawa 395 / O395).